The chain runs to 1061 residues: Zinc finger protein ZFPM1 (1061 aa).

The CCHC FOG-type 1 zinc finger occupies 152–185 (VVNKDVFPCKDCGIWYRSERNLQAHLMYYCASRQ). Cys-160, Cys-163, His-176, and Cys-181 together coordinate Zn(2+). 3 C2H2-type zinc fingers span residues 204–228 (RICP…MRSH), 234–256 (FVCL…LKVH), and 262–285 (GVCH…VTNH). Disordered stretches follow at residues 349 to 393 (PSAT…SEET) and 435 to 455 (TEMS…GAAT). The segment covering 378 to 388 (SPISSSSSASS) has biased composition (low complexity). Positions 436–448 (EMSSPTPGSSPVP) are enriched in polar residues. The segment at 508-541 (SAVPKGATCFECEITFNNINNYYVHKRLYCSGRH) adopts a CCHC FOG-type 2 zinc-finger fold. Residues Cys-516, Cys-519, His-532, and Cys-537 each contribute to the Zn(2+) site. 2 disordered regions span residues 561–586 (ALAS…ESSA) and 599–630 (MDCE…NRTV). Positions 565 to 574 (GFSSTEQEAS) are enriched in polar residues. Residues 623 to 656 (EEDPNRTVCGACNIRFSRHETYVVHKRYYCASRH) form a CCHC FOG-type 3 zinc finger. Zn(2+) is bound by residues Cys-631, Cys-634, His-647, and Cys-652. Residues 661–681 (RRREVNKPGPPYTTQPTPRTR) are disordered. The interaction with CTBP stretch occupies residues 736–742 (PIDLSKK). The CCHC FOG-type 4 zinc finger occupies 759–792 (APLADYHECTACRISFNSLESYLAHKKFSCPTAP). Zn(2+)-binding residues include Cys-767, Cys-770, His-783, and Cys-788. A C2H2-type 4 zinc finger spans residues 869 to 892 (TTCPYCPHNVIIRGDLLEHFRSVH). Residues 917 to 1021 (RGQTSSASEN…MQPPKPSLIS (105 aa)) are disordered. Low complexity-rich tracts occupy residues 933 to 942 (VSSASPLQLP) and 954 to 972 (TTSS…STPR). The span at 973-984 (PLLPTSPAPPSN) shows a compositional bias: pro residues. The segment at 1023 to 1056 (VPNGNHRYCRLCNIKFSSLSTFIAHKKYYCSSHA) adopts a CCHC FOG-type 5 zinc-finger fold. The Zn(2+) site is built by Cys-1031, Cys-1034, His-1047, and Cys-1052.

It belongs to the FOG (Friend of GATA) family. As to quaternary structure, interacts with corepressor CTBP. Interacts with the N-terminal zinc-finger of GATA1 and probably GATA2. Predominantly expressed in heart and brain. Also expressed in ventral blood island and adult spleen.

The protein localises to the nucleus. Transcription regulator that plays an central role in red blood cell differentiation. Essential cofactor that acts via the formation of a heterodimer with transcription factors of the GATA family GATA1 and GATA2. Such heterodimer can both activate or repress transcriptional activity, depending on the cell and promoter context. Acts as a repressor of red blood cells, probably by modulating activity of GATA1. This Xenopus laevis (African clawed frog) protein is Zinc finger protein ZFPM1 (zfpm1).